The following is a 314-amino-acid chain: Ribosomal protein L11 methyltransferase (314 aa).

Residues threonine 164, glycine 185, aspartate 207, and asparagine 249 each contribute to the S-adenosyl-L-methionine site.

It belongs to the methyltransferase superfamily. PrmA family.

Its subcellular location is the cytoplasm. The catalysed reaction is L-lysyl-[protein] + 3 S-adenosyl-L-methionine = N(6),N(6),N(6)-trimethyl-L-lysyl-[protein] + 3 S-adenosyl-L-homocysteine + 3 H(+). Functionally, methylates ribosomal protein L11. In Clostridium beijerinckii (strain ATCC 51743 / NCIMB 8052) (Clostridium acetobutylicum), this protein is Ribosomal protein L11 methyltransferase.